Consider the following 638-residue polypeptide: Zinc finger protein 143 (638 aa).

Met-1 carries the post-translational modification N-acetylmethionine. Residue Lys-213 forms a Glycyl lysine isopeptide (Lys-Gly) (interchain with G-Cter in SUMO2) linkage. C2H2-type zinc fingers lie at residues 237 to 261 (FRCK…ERSH), 267 to 291 (YQCE…FRTH), 297 to 321 (YRCS…IRTH), and 327 to 351 (FKCP…IRTH). The residue at position 352 (Thr-352) is a Phosphothreonine. C2H2-type zinc fingers lie at residues 357 to 381 (YYCT…VRIH), 387 to 411 (YVCT…HVVH), and 417 to 440 (YNCN…RTAH). Lys-406 participates in a covalent cross-link: Glycyl lysine isopeptide (Lys-Gly) (interchain with G-Cter in SUMO2).

This sequence belongs to the GLI C2H2-type zinc-finger protein family. Interacts with CHD8. Forms a complex with HCFC1 and ZNF143.

It localises to the nucleus. Its function is as follows. Transcriptional activator. Activates the gene for selenocysteine tRNA (tRNAsec). Binds to the SPH motif of small nuclear RNA (snRNA) gene promoters. Participates in efficient U6 RNA polymerase III transcription via its interaction with CHD8. In complex with HCFC1 and ZNF143, regulates the expression of several genes, including AP2S1, ESCO2, OPHN1, RBL1, UBXN8 and ZNF32. The polypeptide is Zinc finger protein 143 (Znf143) (Mus musculus (Mouse)).